The chain runs to 75 residues: Dermaseptin-SP5 (75 aa).

A signal peptide spans 1–22 (MAFLKKSLFLVLFLGLVSLSMC). The propeptide occupies 23–45 (EEEKRENEVEEEQEDDEQSELRR). The segment at 26–46 (KRENEVEEEQEDDEQSELRRS) is disordered. A compositionally biased stretch (acidic residues) spans 30–40 (EVEEEQEDDEQ). Residue Pro-72 is modified to Proline amide. Positions 74–75 (EQ) are excised as a propeptide.

Belongs to the frog skin active peptide (FSAP) family. Dermaseptin subfamily. Expressed by the skin glands.

It localises to the secreted. The protein resides in the target cell membrane. In terms of biological role, antimicrobial peptide with weak activity against Gram-positive and Gram-negative bacteria and fungi. Has been tested against E.coli (MIC=96.06-256 uM), S.aureus (MIC&gt;192.12 uM), K.pneumoniae (MIC&gt;189.00 uM) and C.albicans (MIC=384.24-1024 uM). Probably acts by disturbing membrane functions with its alpha-helical amphipathic structure. May penetrate bacterial membranes, but stay at the mammalian membrane surface. Does not show hemolytic activity. Does not interact at all with cardiolipin. The protein is Dermaseptin-SP5 of Agalychnis spurrelli (Gliding leaf frog).